We begin with the raw amino-acid sequence, 598 residues long: UvrABC system protein C (598 aa).

One can recognise a GIY-YIG domain in the interval 14–91; it reads DSPGCYLHKD…IQKNMPKYNI (78 aa). A UVR domain is found at 196 to 231; it reads DKIIEDLRSKMLAASEEMAFERAAEYRDLISGIATM.

This sequence belongs to the UvrC family. In terms of assembly, interacts with UvrB in an incision complex.

The protein resides in the cytoplasm. In terms of biological role, the UvrABC repair system catalyzes the recognition and processing of DNA lesions. UvrC both incises the 5' and 3' sides of the lesion. The N-terminal half is responsible for the 3' incision and the C-terminal half is responsible for the 5' incision. This is UvrABC system protein C from Streptococcus pyogenes serotype M6 (strain ATCC BAA-946 / MGAS10394).